Consider the following 321-residue polypeptide: Small ribosomal subunit biogenesis GTPase RsgA (321 aa).

Residues 89 to 248 (QSWINRPPVA…VADTPGFNRP (160 aa)) enclose the CP-type G domain. Residues 138 to 141 (TKRD) and 190 to 198 (GPSGVGKTS) each bind GTP. Cysteine 273, cysteine 278, histidine 280, and cysteine 286 together coordinate Zn(2+).

The protein belongs to the TRAFAC class YlqF/YawG GTPase family. RsgA subfamily. Monomer. Associates with 30S ribosomal subunit, binds 16S rRNA. Zn(2+) is required as a cofactor.

It localises to the cytoplasm. One of several proteins that assist in the late maturation steps of the functional core of the 30S ribosomal subunit. Helps release RbfA from mature subunits. May play a role in the assembly of ribosomal proteins into the subunit. Circularly permuted GTPase that catalyzes slow GTP hydrolysis, GTPase activity is stimulated by the 30S ribosomal subunit. The protein is Small ribosomal subunit biogenesis GTPase RsgA of Prochlorococcus marinus (strain MIT 9313).